We begin with the raw amino-acid sequence, 447 residues long: GTPase Der (447 aa).

2 EngA-type G domains span residues 3–167 and 181–354; these read PVIA…VQER and VKIA…AAAM. Residues 9 to 16, 56 to 60, 119 to 122, 187 to 194, 234 to 238, and 299 to 302 contribute to the GTP site; these read GRPNVGKS, DTGGF, NKAE, DTAGL, and NKWD. A KH-like domain is found at 355–439; that stretch reads IKLPTPQITR…PLRIEFRTNK (85 aa).

The protein belongs to the TRAFAC class TrmE-Era-EngA-EngB-Septin-like GTPase superfamily. EngA (Der) GTPase family. As to quaternary structure, associates with the 50S ribosomal subunit.

Functionally, GTPase that plays an essential role in the late steps of ribosome biogenesis. In Cupriavidus metallidurans (strain ATCC 43123 / DSM 2839 / NBRC 102507 / CH34) (Ralstonia metallidurans), this protein is GTPase Der.